Here is a 123-residue protein sequence, read N- to C-terminus: Defensin beta 118 (123 aa).

The N-terminal stretch at 1–19 (MKLLLLALPMLVLLPQVIP) is a signal peptide. 3 cysteine pairs are disulfide-bonded: C27/C54, C34/C48, and C38/C55. The propeptide occupies 65-123 (VPTTSPTPLSDSTRGVIDDILTVRFTTDYFEVSSKKNMVEESEVGQGTQTSLPNVHHSS). The disordered stretch occupies residues 100–123 (KNMVEESEVGQGTQTSLPNVHHSS). Residues 109–123 (GQGTQTSLPNVHHSS) are compositionally biased toward polar residues.

The protein belongs to the beta-defensin family. The three-dimensional structure formed by the three intramolecular disulfide bridges is indispensable for antimicrobial activity.

The protein localises to the secreted. Host defense peptide that exhibits antimicrobial activity against both Gram-negative bacteria, such as E.coli and S.typhimurium, and Gram-positive bacteria, such as S.aureus and B.subtilis. Inhibits cell adhesion of E.coli on intestinal epithelial enterocytes. Causes rapid permeabilization of both the outer and inner membrane of E.coli, leading to morphological alterations on the bacterial surface. Binds to bacterial lipopolysaccharides (LPS) with high affinity, and may thereby be involved in immunoregulation through LPS neutralization. May contribute to epididymal innate immunity and protect the sperm against attack by microorganisms. The protein is Defensin beta 118 (DEFB118) of Pongo pygmaeus (Bornean orangutan).